Here is a 560-residue protein sequence, read N- to C-terminus: Synaptotagmin-5 (560 aa).

A helical membrane pass occupies residues 2–22 (GFIVGVVIGLLVGIAIIIGFV). One can recognise an SMP-LTD domain in the interval 67–249 (ERQKLTWLNH…WPVRKVIPII (183 aa)). The segment at 227 to 523 (EETIRDAVED…YIGRCILTLT (297 aa)) is phospholipid binding. C2 domains are found at residues 243-364 (RKVI…DVWL) and 417-535 (TTDE…KDWY). The Ca(2+) site is built by aspartate 278, aspartate 284, aspartate 334, glutamate 336, aspartate 451, aspartate 457, aspartate 506, aspartate 508, and aspartate 513.

This sequence belongs to the synaptotagmin family. It depends on Ca(2+) as a cofactor.

It localises to the membrane. Functionally, may be involved in membrane trafficking. This Arabidopsis thaliana (Mouse-ear cress) protein is Synaptotagmin-5 (SYT5).